A 279-amino-acid polypeptide reads, in one-letter code: Ribosomal RNA small subunit methyltransferase I (279 aa).

Belongs to the methyltransferase superfamily. RsmI family.

It localises to the cytoplasm. It carries out the reaction cytidine(1402) in 16S rRNA + S-adenosyl-L-methionine = 2'-O-methylcytidine(1402) in 16S rRNA + S-adenosyl-L-homocysteine + H(+). Catalyzes the 2'-O-methylation of the ribose of cytidine 1402 (C1402) in 16S rRNA. The sequence is that of Ribosomal RNA small subunit methyltransferase I from Synechocystis sp. (strain ATCC 27184 / PCC 6803 / Kazusa).